The following is a 250-amino-acid chain: Pyrroloquinoline-quinone synthase (250 aa).

Belongs to the PqqC family.

It catalyses the reaction 6-(2-amino-2-carboxyethyl)-7,8-dioxo-1,2,3,4,7,8-hexahydroquinoline-2,4-dicarboxylate + 3 O2 = pyrroloquinoline quinone + 2 H2O2 + 2 H2O + H(+). It functions in the pathway cofactor biosynthesis; pyrroloquinoline quinone biosynthesis. Ring cyclization and eight-electron oxidation of 3a-(2-amino-2-carboxyethyl)-4,5-dioxo-4,5,6,7,8,9-hexahydroquinoline-7,9-dicarboxylic-acid to PQQ. This is Pyrroloquinoline-quinone synthase from Xanthomonas axonopodis pv. citri (strain 306).